Here is a 326-residue protein sequence, read N- to C-terminus: ATP synthase gamma chain (326 aa).

This sequence belongs to the ATPase gamma chain family. In terms of assembly, F-type ATPases have 2 components, CF(1) - the catalytic core - and CF(0) - the membrane proton channel. CF(1) has five subunits: alpha(3), beta(3), gamma(1), delta(1), epsilon(1). CF(0) has three main subunits: a, b and c.

The protein localises to the cell membrane. Functionally, produces ATP from ADP in the presence of a proton gradient across the membrane. The gamma chain is believed to be important in regulating ATPase activity and the flow of protons through the CF(0) complex. The protein is ATP synthase gamma chain of Rhodococcus opacus (strain B4).